A 316-amino-acid polypeptide reads, in one-letter code: Acetyl-coenzyme A carboxylase carboxyl transferase subunit alpha (316 aa).

Residues 35 to 292 enclose the CoA carboxyltransferase C-terminal domain; the sequence is EIEILSQKLE…KTYVLQELKD (258 aa).

This sequence belongs to the AccA family. Acetyl-CoA carboxylase is a heterohexamer composed of biotin carboxyl carrier protein (AccB), biotin carboxylase (AccC) and two subunits each of ACCase subunit alpha (AccA) and ACCase subunit beta (AccD).

It is found in the cytoplasm. It catalyses the reaction N(6)-carboxybiotinyl-L-lysyl-[protein] + acetyl-CoA = N(6)-biotinyl-L-lysyl-[protein] + malonyl-CoA. The protein operates within lipid metabolism; malonyl-CoA biosynthesis; malonyl-CoA from acetyl-CoA: step 1/1. Functionally, component of the acetyl coenzyme A carboxylase (ACC) complex. First, biotin carboxylase catalyzes the carboxylation of biotin on its carrier protein (BCCP) and then the CO(2) group is transferred by the carboxyltransferase to acetyl-CoA to form malonyl-CoA. The chain is Acetyl-coenzyme A carboxylase carboxyl transferase subunit alpha from Alkaliphilus oremlandii (strain OhILAs) (Clostridium oremlandii (strain OhILAs)).